The primary structure comprises 458 residues: Bifunctional protein GlmU (458 aa).

Positions 1–232 (MISPLSVIIL…TFEIEGVNNR (232 aa)) are pyrophosphorylase. Residues 10-13 (LAAG), Lys24, Gln79, 84-85 (GT), 106-108 (YGD), Gly142, Glu157, Asn172, and Asn230 each bind UDP-N-acetyl-alpha-D-glucosamine. Mg(2+) is bound at residue Asp108. Asn230 contributes to the Mg(2+) binding site. The interval 233–253 (QQLASLERTWQGKLVADLQEA) is linker. An N-acetyltransferase region spans residues 254 to 458 (GVQFADPTRV…KDNFQRPTKK (205 aa)). UDP-N-acetyl-alpha-D-glucosamine-binding residues include Arg336 and Lys354. His366 functions as the Proton acceptor in the catalytic mechanism. The UDP-N-acetyl-alpha-D-glucosamine site is built by Tyr369 and Asn380. Residues Ala383, 389–390 (NY), Ser408, Ala426, and Arg443 each bind acetyl-CoA.

It in the N-terminal section; belongs to the N-acetylglucosamine-1-phosphate uridyltransferase family. The protein in the C-terminal section; belongs to the transferase hexapeptide repeat family. As to quaternary structure, homotrimer. Requires Mg(2+) as cofactor.

It is found in the cytoplasm. It carries out the reaction alpha-D-glucosamine 1-phosphate + acetyl-CoA = N-acetyl-alpha-D-glucosamine 1-phosphate + CoA + H(+). The catalysed reaction is N-acetyl-alpha-D-glucosamine 1-phosphate + UTP + H(+) = UDP-N-acetyl-alpha-D-glucosamine + diphosphate. It functions in the pathway nucleotide-sugar biosynthesis; UDP-N-acetyl-alpha-D-glucosamine biosynthesis; N-acetyl-alpha-D-glucosamine 1-phosphate from alpha-D-glucosamine 6-phosphate (route II): step 2/2. The protein operates within nucleotide-sugar biosynthesis; UDP-N-acetyl-alpha-D-glucosamine biosynthesis; UDP-N-acetyl-alpha-D-glucosamine from N-acetyl-alpha-D-glucosamine 1-phosphate: step 1/1. Its pathway is bacterial outer membrane biogenesis; LPS lipid A biosynthesis. Functionally, catalyzes the last two sequential reactions in the de novo biosynthetic pathway for UDP-N-acetylglucosamine (UDP-GlcNAc). The C-terminal domain catalyzes the transfer of acetyl group from acetyl coenzyme A to glucosamine-1-phosphate (GlcN-1-P) to produce N-acetylglucosamine-1-phosphate (GlcNAc-1-P), which is converted into UDP-GlcNAc by the transfer of uridine 5-monophosphate (from uridine 5-triphosphate), a reaction catalyzed by the N-terminal domain. The sequence is that of Bifunctional protein GlmU from Psychrobacter arcticus (strain DSM 17307 / VKM B-2377 / 273-4).